The following is a 389-amino-acid chain: tRNA(Met) cytidine acetate ligase (389 aa).

ATP is bound by residues 8–21 (IAEF…HEYL), Gly-97, Asn-153, and Arg-176.

This sequence belongs to the TmcAL family.

The protein resides in the cytoplasm. The enzyme catalyses cytidine(34) in elongator tRNA(Met) + acetate + ATP = N(4)-acetylcytidine(34) in elongator tRNA(Met) + AMP + diphosphate. Functionally, catalyzes the formation of N(4)-acetylcytidine (ac(4)C) at the wobble position of elongator tRNA(Met), using acetate and ATP as substrates. First activates an acetate ion to form acetyladenylate (Ac-AMP) and then transfers the acetyl group to tRNA to form ac(4)C34. This chain is tRNA(Met) cytidine acetate ligase, found in Lactococcus lactis subsp. lactis (strain IL1403) (Streptococcus lactis).